Consider the following 203-residue polypeptide: Mitotic spindle assembly checkpoint protein MAD2A (203 aa).

An HORMA domain is found at Lys14 to Val196. The segment at Ser194–Asp203 is required for assuming the closed conformation and for interaction with cdc20.

This sequence belongs to the MAD2 family. In terms of assembly, interacts with cdc20.

Its subcellular location is the nucleus. The protein resides in the chromosome. The protein localises to the centromere. It is found in the kinetochore. It localises to the cytoplasm. Functionally, component of the spindle-assembly checkpoint that prevents the onset of anaphase until all chromosomes are properly aligned at the metaphase plate. Required for the execution of the mitotic checkpoint which monitors the process of kinetochore-spindle attachment and inhibits the activity of the anaphase promoting complex until all chromosomes are aligned at the metaphase plate. This Dictyostelium discoideum (Social amoeba) protein is Mitotic spindle assembly checkpoint protein MAD2A (mad2l1-1).